The following is a 128-amino-acid chain: Large ribosomal subunit protein uL22 (128 aa).

The disordered stretch occupies residues 1 to 22; sequence MARGHRSQIKRERNANKDTRPS. Residues 9-21 are compositionally biased toward basic and acidic residues; sequence IKRERNANKDTRP.

This sequence belongs to the universal ribosomal protein uL22 family. In terms of assembly, part of the 50S ribosomal subunit.

Functionally, this protein binds specifically to 23S rRNA; its binding is stimulated by other ribosomal proteins, e.g. L4, L17, and L20. It is important during the early stages of 50S assembly. It makes multiple contacts with different domains of the 23S rRNA in the assembled 50S subunit and ribosome. In terms of biological role, the globular domain of the protein is located near the polypeptide exit tunnel on the outside of the subunit, while an extended beta-hairpin is found that lines the wall of the exit tunnel in the center of the 70S ribosome. The chain is Large ribosomal subunit protein uL22 from Lachnoclostridium phytofermentans (strain ATCC 700394 / DSM 18823 / ISDg) (Clostridium phytofermentans).